The chain runs to 768 residues: WD repeat-containing protein 20 homolog (768 aa).

The segment at 103-122 (ESPEAVAPTSSTYEHHKNEP) is disordered. WD repeat units lie at residues 224–264 (IEKT…ASSN), 302–342 (IGEG…LLAV), 345–384 (SYFG…VVCR), and 454–497 (CSLA…LNQG). The interval 531 to 608 (VSPGGAGVNA…VNSESSKKQN (78 aa)) is disordered. The span at 539–553 (NASSDSQSITNNHTT) shows a compositional bias: polar residues. Positions 570-582 (FSKFTSGSSSATS) are enriched in low complexity. The segment covering 595-608 (NGASVNSESSKKQN) has biased composition (polar residues). The WD 5 repeat unit spans residues 646–683 (VSHDRLTVLEFREDCVVTACQEGYICTWGRPGRYQPKR). The segment at 684 to 749 (DCINSPGTAS…PNITSPSYRV (66 aa)) is disordered. A compositionally biased stretch (polar residues) spans 688 to 712 (SPGTASPESGQKPSGSTSAMTSSYG). The segment covering 724–733 (SRSSSTYSNS) has biased composition (low complexity). Residues 734-749 (EQQLRSPNITSPSYRV) are compositionally biased toward polar residues.

Interacts with usp-46; the interaction increases the catalytic activity of usp-46 in the presence of wdr-48. Expressed in several neurons in the head and tail.

In terms of biological role, together with wdr-48, binds to and stimulates the activity of the deubiquitinating enzyme usp-46, leading to deubiquitination and stabilization of the glr-1 glutamate receptor. The protein is WD repeat-containing protein 20 homolog of Caenorhabditis elegans.